The primary structure comprises 349 residues: DCD domain-containing protein NRP (349 aa).

The segment at 157 to 201 (NNNKNKGIDEDHQIQKGGKKNRKNQQNNNNQRNEDDKNNGLDKRF) is disordered. Residues 188 to 201 (RNEDDKNNGLDKRF) are compositionally biased toward basic and acidic residues. The DCD domain maps to 214 to 346 (ETIGGYIFVC…VLSLLDIFAD (133 aa)).

In terms of assembly, interacts with CRY2 in the cytoplasm. Interacts with Verticillium dahliae PevD1. Interacts with FYPP3. As to expression, highly expressed in sensecent leaves, cauline leaves and sepals. Expressed in the shoot apical meristem, leaf veins, central cylinder, root hair zone, root tips, rosette leaves, flowers and siliques.

Its subcellular location is the cytoplasm. In terms of biological role, contributes to the initial phase of responses to abiotic and biotic stress signals. Binds FYPP3 and facilitates FYPP3 degradation to promote abscisic acid (ABA) response. The polypeptide is DCD domain-containing protein NRP (Arabidopsis thaliana (Mouse-ear cress)).